A 388-amino-acid chain; its full sequence is Succinate--CoA ligase [ADP-forming] subunit beta (388 aa).

Residues 9 to 244 (KQLFAEYGLP…PSQEDSREAH (236 aa)) enclose the ATP-grasp domain. Residues K46, 53-55 (GRG), E99, T102, and E107 each bind ATP. Mg(2+) contacts are provided by N199 and D213. Residues N264 and 321–323 (GIV) each bind substrate.

It belongs to the succinate/malate CoA ligase beta subunit family. In terms of assembly, heterotetramer of two alpha and two beta subunits. It depends on Mg(2+) as a cofactor.

The catalysed reaction is succinate + ATP + CoA = succinyl-CoA + ADP + phosphate. It catalyses the reaction GTP + succinate + CoA = succinyl-CoA + GDP + phosphate. It functions in the pathway carbohydrate metabolism; tricarboxylic acid cycle; succinate from succinyl-CoA (ligase route): step 1/1. In terms of biological role, succinyl-CoA synthetase functions in the citric acid cycle (TCA), coupling the hydrolysis of succinyl-CoA to the synthesis of either ATP or GTP and thus represents the only step of substrate-level phosphorylation in the TCA. The beta subunit provides nucleotide specificity of the enzyme and binds the substrate succinate, while the binding sites for coenzyme A and phosphate are found in the alpha subunit. This is Succinate--CoA ligase [ADP-forming] subunit beta from Pseudoalteromonas translucida (strain TAC 125).